The primary structure comprises 839 residues: Periplasmic nitrate reductase (839 aa).

A signal peptide (tat-type signal) is located at residues Met1–Ala34. Residues Ile46–Asp102 enclose the 4Fe-4S Mo/W bis-MGD-type domain. 4 residues coordinate [4Fe-4S] cluster: Cys53, Cys56, Cys60, and Cys88. Mo-bis(molybdopterin guanine dinucleotide) is bound by residues Lys90, Gln157, Asn182, Cys186, Trp219–Met226, Ser250–His254, Gln269–Asp271, Met379, Gln383, Asn489, Ser515–Asp516, Lys538, Asp565, and Thr729–Thr738. Phe805 provides a ligand contact to substrate. Residues Asn813 and Lys830 each contribute to the Mo-bis(molybdopterin guanine dinucleotide) site.

This sequence belongs to the prokaryotic molybdopterin-containing oxidoreductase family. NasA/NapA/NarB subfamily. As to quaternary structure, component of the periplasmic nitrate reductase NapAB complex composed of NapA and NapB. The cofactor is [4Fe-4S] cluster. Mo-bis(molybdopterin guanine dinucleotide) is required as a cofactor. Predicted to be exported by the Tat system. The position of the signal peptide cleavage has not been experimentally proven.

The protein resides in the periplasm. The catalysed reaction is 2 Fe(II)-[cytochrome] + nitrate + 2 H(+) = 2 Fe(III)-[cytochrome] + nitrite + H2O. Catalytic subunit of the periplasmic nitrate reductase complex NapAB. Receives electrons from NapB and catalyzes the reduction of nitrate to nitrite. The protein is Periplasmic nitrate reductase of Laribacter hongkongensis (strain HLHK9).